Here is a 339-residue protein sequence, read N- to C-terminus: UPF0450 protein C17orf58 (339 aa).

A signal peptide spans 1–17 (MTARAFWLLCLIVGSSP). The segment at 17 to 191 (PEAPVAERKT…PQRDAEPGAE (175 aa)) is disordered. The span at 21–36 (VAERKTSPPHSRKPDS) shows a compositional bias: basic and acidic residues. The span at 56–72 (APQRPRAAEVAPAARAW) shows a compositional bias: low complexity. Basic and acidic residues predominate over residues 112–125 (ASPRREPASEDAPR). Positions 132–163 (LRFPAARPPALATEGSAGHAHPNRPRAAALAP) are enriched in low complexity. 3 cysteine pairs are disulfide-bonded: Cys-193-Cys-267, Cys-197-Cys-271, and Cys-208-Cys-338. Residues 193–338 (CARACRSDLD…QIQGAIHTQC (146 aa)) enclose the NTR domain.

This sequence belongs to the UPF0450 family.

This chain is UPF0450 protein C17orf58 (C17orf58), found in Homo sapiens (Human).